Consider the following 365-residue polypeptide: MSTDITPSSAPQCPDHIVFEHVTKEFRTRSGTVRALDDVSLAIKRGSISAVIGHSGAGKSTLVRLINGLETPTRGRVLVDGTDVSQLSDKAMRPLRADIGMIFQQFNLFGSRTIYDNVAYPLKLAHWKKADEKKRITELLSFVGLTSKAWDHPDQLSGGQKQRVGIARALATKPSILLADESTSALDPETTADVLSLLKRVNAELGVTVVVITHEMEVVRSIAQQVSVLAAGHLVESGSARQVFAHPQSETTQRFLATIIGQHPNGEEQARLQSENPHARLVDVSSVASHSFGDALARISHTGASFQIVHGGVIEVHDGSLGNYTVALSGPAQAVEQAVQILEEVSNSAAPTTSATVPTPTEEAH.

The region spanning 17 to 256 is the ABC transporter domain; sequence IVFEHVTKEF…PQSETTQRFL (240 aa). An ATP-binding site is contributed by 53–60; sequence GHSGAGKS. Residues 346-365 form a disordered region; the sequence is SNSAAPTTSATVPTPTEEAH.

The protein belongs to the ABC transporter superfamily. Methionine importer (TC 3.A.1.24) family. The complex is composed of two ATP-binding proteins (MetN), two transmembrane proteins (MetI) and a solute-binding protein (MetQ).

The protein localises to the cell membrane. It catalyses the reaction L-methionine(out) + ATP + H2O = L-methionine(in) + ADP + phosphate + H(+). The enzyme catalyses D-methionine(out) + ATP + H2O = D-methionine(in) + ADP + phosphate + H(+). In terms of biological role, part of the ABC transporter complex MetNIQ involved in methionine import. Responsible for energy coupling to the transport system. The sequence is that of Methionine import ATP-binding protein MetN from Cutibacterium acnes (strain DSM 16379 / KPA171202) (Propionibacterium acnes).